A 396-amino-acid chain; its full sequence is Elongation factor Tu 1 (396 aa).

Residues 10 to 206 form the tr-type G domain; the sequence is KPHINVGTIG…VLDSYIPEPQ (197 aa). The G1 stretch occupies residues 19 to 26; sequence GHVDHGKT. 19 to 26 serves as a coordination point for GTP; the sequence is GHVDHGKT. T26 is a binding site for Mg(2+). Residues 60–64 form a G2 region; that stretch reads GITIN. Positions 81 to 84 are G3; that stretch reads DCPG. GTP-binding positions include 81 to 85 and 136 to 139; these read DCPGH and NKAD. Residues 136–139 are G4; sequence NKAD. The tract at residues 174-176 is G5; it reads SAL.

Belongs to the TRAFAC class translation factor GTPase superfamily. Classic translation factor GTPase family. EF-Tu/EF-1A subfamily. As to quaternary structure, monomer.

Its subcellular location is the cytoplasm. The catalysed reaction is GTP + H2O = GDP + phosphate + H(+). Its function is as follows. GTP hydrolase that promotes the GTP-dependent binding of aminoacyl-tRNA to the A-site of ribosomes during protein biosynthesis. This Nitrosomonas eutropha (strain DSM 101675 / C91 / Nm57) protein is Elongation factor Tu 1.